The primary structure comprises 915 residues: Translation initiation factor IF-2 (915 aa).

Disordered stretches follow at residues 1–105 (MSEG…RALT) and 121–295 (VEAA…RAAI). The segment covering 57–81 (PGTPSAPEGGSSSAPAPQSGNAPQG) has biased composition (low complexity). The span at 84–101 (RSGGGNRGSGRGGAGGAG) shows a compositional bias: gly residues. Basic and acidic residues-rich tracts occupy residues 121 to 135 (VEAARREVERREQEK) and 143 to 180 (EEARRREEEAKRAAEEEARRKEQEEADRIAAEAARKAA). A compositionally biased stretch (pro residues) spans 186-195 (AEAPPVPPPA). Low complexity-rich tracts occupy residues 201–213 (AAPSSRSAPSRTA) and 230–239 (KVPVAAPSAP). Over residues 243–256 (RLRERGDEGEEERK) the composition is skewed to basic and acidic residues. Low complexity predominate over residues 266–278 (PAPRKAAAPVAKK). The span at 279-295 (AVAEPRRGGRIDVRAAI) shows a compositional bias: basic and acidic residues. Residues 414–584 (PRPPVVTVMG…LLQAEVLDLK (171 aa)) enclose the tr-type G domain. A G1 region spans residues 423–430 (GHVDHGKT). 423–430 (GHVDHGKT) lines the GTP pocket. Positions 448-452 (GITQH) are G2. The interval 470-473 (DTPG) is G3. GTP contacts are provided by residues 470-474 (DTPGH) and 524-527 (NKCD). The G4 stretch occupies residues 524–527 (NKCD). Positions 560-562 (SAL) are G5.

The protein belongs to the TRAFAC class translation factor GTPase superfamily. Classic translation factor GTPase family. IF-2 subfamily.

The protein resides in the cytoplasm. One of the essential components for the initiation of protein synthesis. Protects formylmethionyl-tRNA from spontaneous hydrolysis and promotes its binding to the 30S ribosomal subunits. Also involved in the hydrolysis of GTP during the formation of the 70S ribosomal complex. The chain is Translation initiation factor IF-2 from Granulibacter bethesdensis (strain ATCC BAA-1260 / CGDNIH1).